A 493-amino-acid chain; its full sequence is Glutamate--tRNA ligase (493 aa).

Positions 10–20 (PSPTGDPHVGT) match the 'HIGH' region motif. The 'KMSKS' region signature appears at 251-255 (KLSKR). Lys254 provides a ligand contact to ATP.

The protein belongs to the class-I aminoacyl-tRNA synthetase family. Glutamate--tRNA ligase type 1 subfamily. In terms of assembly, monomer.

The protein localises to the cytoplasm. It catalyses the reaction tRNA(Glu) + L-glutamate + ATP = L-glutamyl-tRNA(Glu) + AMP + diphosphate. In terms of biological role, catalyzes the attachment of glutamate to tRNA(Glu) in a two-step reaction: glutamate is first activated by ATP to form Glu-AMP and then transferred to the acceptor end of tRNA(Glu). This Pseudomonas putida (strain ATCC 47054 / DSM 6125 / CFBP 8728 / NCIMB 11950 / KT2440) protein is Glutamate--tRNA ligase.